The chain runs to 327 residues: Cyclic AMP-responsive element-binding protein 1 (327 aa).

2 disordered regions span residues 1–29 (MTMD…TVQA) and 94–113 (SEDS…RREI). The 139-residue stretch at 8–146 (DNQQSGDAAV…IEEEKSEEET (139 aa)) folds into the KID domain. Residues 20 to 29 (AESQQMTVQA) are compositionally biased toward polar residues. Serine 119 is subject to Phosphoserine; by CaMK1, CaMK2, CaMK4, PKB/AKT1 or PKB/AKT2, RPS6KA3, RPS6KA4, RPS6KA5 and SGK1. Lysine 122 participates in a covalent cross-link: Glycyl lysine isopeptide (Lys-Gly) (interchain with G-Cter in SUMO2). The segment at 126–149 (DLSSDAPGVPRIEEEKSEEETSAP) is disordered. Serine 128 carries the post-translational modification Phosphoserine; by CaMK2. Serine 257 is subject to Phosphoserine; by HIPK2. One can recognise a bZIP domain in the interval 269-327 (ARKREVRLMKNREAARECRRKKKEYVKCLENRVAVLENQNKTLIEELKALKDLYCHKSD). The interval 270-295 (RKREVRLMKNREAARECRRKKKEYVK) is basic motif. Glycyl lysine isopeptide (Lys-Gly) (interchain with G-Cter in SUMO1) cross-links involve residues lysine 271 and lysine 290. A leucine-zipper region spans residues 297–318 (LENRVAVLENQNKTLIEELKAL).

Belongs to the bZIP family. Interacts with PPRC1. Binds DNA as a dimer. This dimer is stabilized by magnesium ions. Interacts, through the bZIP domain, with the coactivators CRTC1/TORC1, CRTC2/TORC2 and CRTC3/TORC3. When phosphorylated on Ser-119, binds CREBBP. Interacts with CREBL2; regulates CREB1 phosphorylation, stability and transcriptional activity. Interacts (phosphorylated form) with TOX3. Interacts with ARRB1. Binds to HIPK2. Interacts with SGK1. Interacts with TSSK4; this interaction facilitates phosphorylation on Ser-119. Forms a complex with KMT2A and CREBBP. Interacts with TOX4; CREB1 is required for full induction of TOX4-dependent activity and the interaction is increased by cAMP and inhibited by insulin. In terms of processing, phosphorylation of Ser-119 allows CREBBP binding. Stimulated by phosphorylation. Phosphorylation of both Ser-128 and Ser-119 in the SCN regulates the activity of CREB and participate in circadian rhythm generation. Phosphorylated upon calcium influx by CaMK4 and CaMK2 on Ser-119. CaMK4 is much more potent than CaMK2 in activating CREB. Phosphorylated by CaMK2 on Ser-128. Phosphorylation of Ser-128 blocks CREB-mediated transcription even when Ser-119 is phosphorylated. Phosphorylated by CaMK1. Phosphorylation of Ser-257 by HIPK2 in response to genotoxic stress promotes CREB1 activity, facilitating the recruitment of the coactivator CBP. Phosphorylated at Ser-119 by RPS6KA3, RPS6KA4 and RPS6KA5 in response to mitogenic or stress stimuli. CREBL2 positively regulates phosphorylation at Ser-119 thereby stimulating CREB1 transcriptional activity. In liver, phosphorylation is induced by fasting or glucagon in a circadian fashion. Phosphorylated by TSSK4 on Ser-119. Post-translationally, sumoylated with SUMO1. Sumoylation on Lys-290, but not on Lys-271, is required for nuclear localization of this protein. Sumoylation is enhanced under hypoxia, promoting nuclear localization and stabilization.

It localises to the nucleus. Functionally, phosphorylation-dependent transcription factor that stimulates transcription upon binding to the DNA cAMP response element (CRE), a sequence present in many viral and cellular promoters. Transcription activation is enhanced by the TORC coactivators which act independently of Ser-119 phosphorylation. Involved in different cellular processes including the synchronization of circadian rhythmicity and the differentiation of adipose cells. Regulates the expression of apoptotic and inflammatory response factors in cardiomyocytes in response to ERFE-mediated activation of AKT signaling. This Rattus norvegicus (Rat) protein is Cyclic AMP-responsive element-binding protein 1 (Creb1).